The primary structure comprises 427 residues: Serine hydroxymethyltransferase (427 aa).

(6S)-5,6,7,8-tetrahydrofolate is bound by residues Leu-118 and Gly-122–Leu-124. The residue at position 227 (Lys-227) is an N6-(pyridoxal phosphate)lysine. Ser-351–Phe-353 lines the (6S)-5,6,7,8-tetrahydrofolate pocket.

It belongs to the SHMT family. Homodimer. Pyridoxal 5'-phosphate is required as a cofactor.

It localises to the cytoplasm. It catalyses the reaction (6R)-5,10-methylene-5,6,7,8-tetrahydrofolate + glycine + H2O = (6S)-5,6,7,8-tetrahydrofolate + L-serine. The protein operates within one-carbon metabolism; tetrahydrofolate interconversion. It functions in the pathway amino-acid biosynthesis; glycine biosynthesis; glycine from L-serine: step 1/1. Functionally, catalyzes the reversible interconversion of serine and glycine with tetrahydrofolate (THF) serving as the one-carbon carrier. This reaction serves as the major source of one-carbon groups required for the biosynthesis of purines, thymidylate, methionine, and other important biomolecules. Also exhibits THF-independent aldolase activity toward beta-hydroxyamino acids, producing glycine and aldehydes, via a retro-aldol mechanism. The sequence is that of Serine hydroxymethyltransferase from Thermotoga petrophila (strain ATCC BAA-488 / DSM 13995 / JCM 10881 / RKU-1).